A 684-amino-acid polypeptide reads, in one-letter code: MAGPRACAPLLLLLLLGELLAAAGAQRVGLPGPPGPPGPPGKPGQDGIDGEAGPPGLPGPPGPKGAPGKPGKPGEAGLPGLPGVDGLTGRDGPPGPKGAPGERGSLGPPGPPGLGGKGLPGPPGEAGVSGPPGGIGLRGPPGPSGLPGLPGPPGPPGPPGHPGVLPEGATDLQCPSICPPGPPGPPGMPGFKGPTGYKGEQGEVGKDGEKGDPGPPGPAGLPGSVGLQGPRGLRGLPGPLGPPGDRGPIGFRGPPGIPGAPGKAGDRGERGPEGFRGPKGDLGRPGPKGTPGVAGPSGEPGMPGKDGQNGVPGLDGQKGEAGRNGAPGEKGPNGLPGLPGRAGSKGEKGERGRAGELGEAGPSGEPGVPGDAGMPGERGEAGHRGSAGALGPQGPPGAPGVRGFQGQKGSMGDPGLPGPQGLRGDVGDRGPGGAAGPKGDQGIAGSDGLPGDKGELGPSGLVGPKGESGSRGELGPKGTQGPNGTSGVQGVPGPPGPLGLQGVPGVPGITGKPGVPGKEASEQRIRELCGGMISEQIAQLAAHLRKPLAPGSIGRPGPAGPPGPPGPPGSIGHPGARGPPGYRGPTGELGDPGPRGNQGDRGDKGAAGAGLDGPEGDQGPQGPQGVPGTSKDGQDGAPGEPGPPGDPGLPGAIGAQGTPGICDTSACQGAVLGGVGEKSGSRSS.

An N-terminal signal peptide occupies residues 1 to 25 (MAGPRACAPLLLLLLLGELLAAAGA). Disordered stretches follow at residues 26 to 521 (QRVG…KEAS) and 548 to 665 (LAPG…CDTS). A triple-helical region 3 (COL3) region spans residues 29 to 519 (GLPGPPGPPG…TGKPGVPGKE (491 aa)). Pro residues-rich tracts occupy residues 31–42 (PGPPGPPGPPGK) and 55–64 (PGLPGPPGPK). Positions 66–82 (APGKPGKPGEAGLPGLP) are enriched in low complexity. Residues 130–139 (GPPGGIGLRG) show a composition bias toward gly residues. Composition is skewed to pro residues over residues 140 to 161 (PPGPSGLPGLPGPPGPPGPPGH) and 177 to 188 (ICPPGPPGPPGM). The segment covering 200 to 212 (EQGEVGKDGEKGD) has biased composition (basic and acidic residues). The span at 221–237 (LPGSVGLQGPRGLRGLP) shows a compositional bias: low complexity. Basic and acidic residues-rich tracts occupy residues 264-282 (AGDRGERGPEGFRGPKGDL) and 344-356 (SKGEKGERGRAGE). Positions 423-425 (RGD) match the Cell attachment site motif. N-linked (GlcNAc...) asparagine glycosylation is present at Asn-483. Over residues 498–507 (LGLQGVPGVP) the composition is skewed to low complexity. A nonhelical region 3 (NC3) region spans residues 520–550 (ASEQRIRELCGGMISEQIAQLAAHLRKPLAP). The triple-helical region 2 (COL2) stretch occupies residues 551-630 (GSIGRPGPAG…QGPQGVPGTS (80 aa)). Over residues 558-568 (PAGPPGPPGPP) the composition is skewed to pro residues. Residues 570–586 (SIGHPGARGPPGYRGPT) are compositionally biased toward low complexity. A Cell attachment site motif is present at residues 601–603 (RGD). Residues 617–628 (DQGPQGPQGVPG) are compositionally biased toward low complexity. Positions 631–632 (KD) are nonhelical region 2 (NC2). Positions 633–661 (GQDGAPGEPGPPGDPGLPGAIGAQGTPGI) are triple-helical region 1 (COL1). Residues 662-684 (CDTSACQGAVLGGVGEKSGSRSS) form a nonhelical region 1 (NC1) region.

The protein belongs to the fibril-associated collagens with interrupted helices (FACIT) family. In terms of assembly, heterotrimer of an alpha 1(IX), an alpha 2(IX) and an alpha 3(IX) chain. Covalently linked to the telopeptides of type II collagen by lysine-derived cross-links. In terms of processing, prolines at the third position of the tripeptide repeating unit (G-X-Y) are hydroxylated in some or all of the chains.

The protein resides in the secreted. The protein localises to the extracellular space. Its subcellular location is the extracellular matrix. Structural component of hyaline cartilage and vitreous of the eye. This Homo sapiens (Human) protein is Collagen alpha-3(IX) chain (COL9A3).